A 313-amino-acid chain; its full sequence is Putative S-adenosyl-L-methionine-dependent methyltransferase MAV_5149 (313 aa).

S-adenosyl-L-methionine is bound by residues Asp-135 and 164–165 (DL).

This sequence belongs to the UPF0677 family.

In terms of biological role, exhibits S-adenosyl-L-methionine-dependent methyltransferase activity. This is Putative S-adenosyl-L-methionine-dependent methyltransferase MAV_5149 from Mycobacterium avium (strain 104).